The chain runs to 143 residues: MAPKPASTAGKAPASTASKAPVKSDAAKTASKSKVSSGADGEKKKRKKTRKETYSSYIYKVLKQVHPDTGISNKAMAILNSFVNDIFERIATEASKLASYSKKSTISSREIQTSVRLILPGELAKHAISEGTKSVTKFSSGGK.

The tract at residues methionine 1 to glutamate 52 is disordered. Lysine 11 carries the N6-acetyllysine; alternate modification. Residue lysine 11 forms a Glycyl lysine isopeptide (Lys-Gly) (interchain with G-Cter in SUMO); alternate linkage. Serine 15 carries the post-translational modification Phosphoserine. An N6-acetyllysine modification is found at lysine 19. Over residues lysine 23–alanine 39 the composition is skewed to low complexity. Residue lysine 137 forms a Glycyl lysine isopeptide (Lys-Gly) (interchain with G-Cter in ubiquitin) linkage.

This sequence belongs to the histone H2B family. In terms of assembly, the nucleosome is a histone octamer containing two molecules each of H2A, H2B, H3 and H4 assembled in one H3-H4 heterotetramer and two H2A-H2B heterodimers. The octamer wraps approximately 147 bp of DNA. In terms of processing, monoubiquitinated to form H2BK123ub1. H2BK123ub1 gives a specific tag for epigenetic transcriptional activation and is also prerequisite for H3K4me and H3K79me formation. H2BK123ub1 also modulates the formation of double-strand breaks during meiosis and is a prerequisite for DNA-damage checkpoint activation. Post-translationally, phosphorylated to form H2BS10ph during progression through meiotic prophase. May be correlated with chromosome condensation. Acetylation of N-terminal lysines and particularly formation of H2BK11ac has a positive effect on transcription. In terms of processing, sumoylation to form H2BK6su occurs preferentially near the telomeres and represses gene transcription.

It is found in the nucleus. Its subcellular location is the chromosome. In terms of biological role, core component of nucleosome. Nucleosomes wrap and compact DNA into chromatin, limiting DNA accessibility to the cellular machineries which require DNA as a template. Histones thereby play a central role in transcription regulation, DNA repair, DNA replication and chromosomal stability. DNA accessibility is regulated via a complex set of post-translational modifications of histones, also called histone code, and nucleosome remodeling. This chain is Histone H2B (htbA), found in Agaricus bisporus (White button mushroom).